A 509-amino-acid chain; its full sequence is Probable xyloglucan galactosyltransferase GT12 (509 aa).

At 1–3 (MMK) the chain is on the cytoplasmic side. Residues 4-24 (PVPKLWVVISSAFVFCLLVLF) traverse the membrane as a helical; Signal-anchor for type II membrane protein segment. Residues 25 to 509 (QINKSDLIEA…KLEIIHEKTA (485 aa)) are Lumenal-facing. Residues Asn27, Asn59, Asn65, Asn169, Asn170, Asn195, Asn257, and Asn416 are each glycosylated (N-linked (GlcNAc...) asparagine).

It belongs to the glycosyltransferase 47 family. As to expression, expressed in pollen grains.

The protein resides in the golgi apparatus membrane. In terms of biological role, functions in xyloglucan synthesis by adding side chains to the xylosylated glucan backbone. Involved in the galactosylation of hemicellulose xyloglucan. In Arabidopsis thaliana (Mouse-ear cress), this protein is Probable xyloglucan galactosyltransferase GT12.